The following is a 73-amino-acid chain: Plasticin-A1 (73 aa).

The first 22 residues, 1-22 (MAFLKKSLFLVLFLAIVPLSIC), serve as a signal peptide directing secretion. Positions 23–42 (EEEKREEENEEKQEDDDQSE) are excised as a propeptide. Residues 25–45 (EKREEENEEKQEDDDQSEKRG) are disordered. Over residues 30–40 (ENEEKQEDDDQ) the composition is skewed to acidic residues. A Glycine amide modification is found at glycine 70. A propeptide spanning residues 72-73 (ES) is cleaved from the precursor.

Belongs to the frog skin active peptide (FSAP) family. Plasticin subfamily. Expressed by the skin glands.

The protein resides in the secreted. The protein localises to the target cell membrane. Functionally, peptide with no antimicrobial activity. May act in synergy with cationic peptides by enhancing their activity. Has a moderate hemolytic activity. The sequence is that of Plasticin-A1 from Agalychnis annae (Blue-sided leaf frog).